Here is a 68-residue protein sequence, read N- to C-terminus: Basic phospholipase A2 homolog BdipTx-I (68 aa).

An intrachain disulfide couples cysteine 28 to cysteine 44.

Belongs to the phospholipase A2 family. Group II subfamily. K49 sub-subfamily. In terms of tissue distribution, expressed by the venom gland.

The protein localises to the secreted. In terms of biological role, snake venom phospholipase A2 (PLA2) that lacks enzymatic activity. Is myotoxic, induces edema, and causes systemic effects (renal changes that lead to proteinuria) on mice. A model of myotoxic mechanism has been proposed: an apo Lys49-PLA2 is activated by the entrance of a hydrophobic molecule (e.g. fatty acid) at the hydrophobic channel of the protein leading to a reorientation of a monomer. This reorientation causes a transition between 'inactive' to 'active' states, causing alignment of C-terminal and membrane-docking sites (MDoS) side-by-side and putting the membrane-disruption sites (MDiS) in the same plane, exposed to solvent and in a symmetric position for both monomers. The MDoS region stabilizes the toxin on membrane by the interaction of charged residues with phospholipid head groups. Subsequently, the MDiS region destabilizes the membrane with penetration of hydrophobic residues. This insertion causes a disorganization of the membrane, allowing an uncontrolled influx of ions (i.e. calcium and sodium), and eventually triggering irreversible intracellular alterations and cell death. The sequence is that of Basic phospholipase A2 homolog BdipTx-I from Bothrops diporus (Chaco lancehead).